The sequence spans 183 residues: MTEYDKFAEQLRHPDNPIVFLEVTAGGAPIGTIVIELFADVTPRTAENFRQFCTGEYKKDGVPNGYKNCTFHRVIKDFMIQGGDFCNGDGTGLMSIYGSKFRDENFELKHIGPGMLSMANAGSDTNGCQFFITCAKTDFLDNKHVVFGRVLDGMLTVRKIENVPTGANNKPKLPIVVVQCGQL.

The 163-residue stretch at 20–182 (FLEVTAGGAP…LPIVVVQCGQ (163 aa)) folds into the PPIase cyclophilin-type domain.

The protein belongs to the cyclophilin-type PPIase family. PPIase H subfamily.

It catalyses the reaction [protein]-peptidylproline (omega=180) = [protein]-peptidylproline (omega=0). Functionally, PPIases accelerate the folding of proteins. It catalyzes the cis-trans isomerization of proline imidic peptide bonds in oligopeptides. This is Peptidyl-prolyl cis-trans isomerase 11 (cyn-11) from Caenorhabditis elegans.